A 468-amino-acid polypeptide reads, in one-letter code: 6-phosphogluconate dehydrogenase, NAD(+)-dependent, decarboxylating (468 aa).

Residues 9 to 14 (GLGVMG), 32 to 34 (NYT), 73 to 75 (VTA), and Asn-101 contribute to the NAD(+) site. Substrate is bound by residues Asn-101 and 127 to 129 (SGG). The active-site Proton acceptor is the Lys-181. A substrate-binding site is contributed by 184 to 185 (HN). Glu-188 acts as the Proton donor in catalysis. Positions 189, 259, 286, 445, and 451 each coordinate substrate.

Belongs to the 6-phosphogluconate dehydrogenase family. In terms of assembly, homodimer.

The catalysed reaction is 6-phospho-D-gluconate + NAD(+) = D-ribulose 5-phosphate + CO2 + NADH. Its function is as follows. Catalyzes the oxidative decarboxylation of 6-phosphogluconate to ribulose 5-phosphate and CO(2), with concomitant reduction of NAD to NADH. Does not contribute to oxidative pentose phosphate (PP) pathway fluxes during growth on glucose. The functional role of GntZ remains obscure. This Bacillus subtilis (strain 168) protein is 6-phosphogluconate dehydrogenase, NAD(+)-dependent, decarboxylating (gntZ).